Here is an 883-residue protein sequence, read N- to C-terminus: Translation initiation factor IF-2 (883 aa).

A disordered region spans residues 1-259 (MVDTKTPGDK…GASKQRGRLT (259 aa)). Low complexity-rich tracts occupy residues 10–22 (KTLT…LTLK) and 77–89 (PRQQ…PQQS). Over residues 113–184 (ARVREIEERK…GDAEPAKKPA (72 aa)) the composition is skewed to basic and acidic residues. Low complexity predominate over residues 185-218 (ETSTTTTTAAPARPATTTTRTPTPAGRPPAVAAE). Pro residues predominate over residues 235 to 244 (PARPAPPPKQ). The tr-type G domain occupies 379–548 (PRSPVVTVMG…MIALQAEILE (170 aa)). The G1 stretch occupies residues 388 to 395 (GHVDHGKT). 388-395 (GHVDHGKT) is a GTP binding site. Residues 413 to 417 (GITQH) form a G2 region. The interval 436–439 (DTPG) is G3. Residues 436–440 (DTPGH) and 490–493 (NKID) contribute to the GTP site. The tract at residues 490 to 493 (NKID) is G4. Positions 526 to 528 (SAK) are G5.

This sequence belongs to the TRAFAC class translation factor GTPase superfamily. Classic translation factor GTPase family. IF-2 subfamily.

The protein resides in the cytoplasm. In terms of biological role, one of the essential components for the initiation of protein synthesis. Protects formylmethionyl-tRNA from spontaneous hydrolysis and promotes its binding to the 30S ribosomal subunits. Also involved in the hydrolysis of GTP during the formation of the 70S ribosomal complex. The protein is Translation initiation factor IF-2 of Rhodopseudomonas palustris (strain ATCC BAA-98 / CGA009).